A 321-amino-acid chain; its full sequence is Probable arabinan endo-1,5-alpha-L-arabinosidase A (321 aa).

The N-terminal stretch at 1-19 (MSASAFVAVASCLAALVHG) is a signal peptide. D34 serves as the catalytic Proton acceptor. E200 functions as the Proton donor in the catalytic mechanism.

The protein belongs to the glycosyl hydrolase 43 family.

It localises to the secreted. It catalyses the reaction Endohydrolysis of (1-&gt;5)-alpha-arabinofuranosidic linkages in (1-&gt;5)-arabinans.. It functions in the pathway glycan metabolism; L-arabinan degradation. Functionally, endo-1,5-alpha-L-arabinanase involved in degradation of pectin. Its preferred substrate is linear 1,5-alpha-L-arabinan. In Neosartorya fischeri (strain ATCC 1020 / DSM 3700 / CBS 544.65 / FGSC A1164 / JCM 1740 / NRRL 181 / WB 181) (Aspergillus fischerianus), this protein is Probable arabinan endo-1,5-alpha-L-arabinosidase A (abnA).